Here is a 493-residue protein sequence, read N- to C-terminus: Probable mannosyl-oligosaccharide alpha-1,2-mannosidase 1B (493 aa).

The N-terminal stretch at 1–18 (MHLPSLSVALALVSSSLA) is a signal peptide. N-linked (GlcNAc...) asparagine glycosylation is found at asparagine 87 and asparagine 174. A disulfide bridge connects residues cysteine 324 and cysteine 353. The active-site Proton donor is glutamate 367. A glycan (N-linked (GlcNAc...) asparagine) is linked at asparagine 489.

The protein belongs to the glycosyl hydrolase 47 family. Monomer. Ca(2+) is required as a cofactor. Requires Mg(2+) as cofactor.

The protein localises to the cytoplasmic vesicle lumen. The enzyme catalyses N(4)-(alpha-D-Man-(1-&gt;2)-alpha-D-Man-(1-&gt;2)-alpha-D-Man-(1-&gt;3)-[alpha-D-Man-(1-&gt;2)-alpha-D-Man-(1-&gt;3)-[alpha-D-Man-(1-&gt;2)-alpha-D-Man-(1-&gt;6)]-alpha-D-Man-(1-&gt;6)]-beta-D-Man-(1-&gt;4)-beta-D-GlcNAc-(1-&gt;4)-beta-D-GlcNAc)-L-asparaginyl-[protein] (N-glucan mannose isomer 9A1,2,3B1,2,3) + 4 H2O = N(4)-(alpha-D-Man-(1-&gt;3)-[alpha-D-Man-(1-&gt;3)-[alpha-D-Man-(1-&gt;6)]-alpha-D-Man-(1-&gt;6)]-beta-D-Man-(1-&gt;4)-beta-D-GlcNAc-(1-&gt;4)-beta-D-GlcNAc)-L-asparaginyl-[protein] (N-glucan mannose isomer 5A1,2) + 4 beta-D-mannose. The catalysed reaction is N(4)-(alpha-D-Man-(1-&gt;2)-alpha-D-Man-(1-&gt;2)-alpha-D-Man-(1-&gt;3)-[alpha-D-Man-(1-&gt;3)-[alpha-D-Man-(1-&gt;2)-alpha-D-Man-(1-&gt;6)]-alpha-D-Man-(1-&gt;6)]-beta-D-Man-(1-&gt;4)-beta-D-GlcNAc-(1-&gt;4)-beta-D-GlcNAc)-L-asparaginyl-[protein] (N-glucan mannose isomer 8A1,2,3B1,3) + 3 H2O = N(4)-(alpha-D-Man-(1-&gt;3)-[alpha-D-Man-(1-&gt;3)-[alpha-D-Man-(1-&gt;6)]-alpha-D-Man-(1-&gt;6)]-beta-D-Man-(1-&gt;4)-beta-D-GlcNAc-(1-&gt;4)-beta-D-GlcNAc)-L-asparaginyl-[protein] (N-glucan mannose isomer 5A1,2) + 3 beta-D-mannose. Its pathway is protein modification; protein glycosylation. Its function is as follows. Involved in the maturation of Asn-linked oligosaccharides. Progressively trims alpha-1,2-linked mannose residues from Man(9)GlcNAc(2) to produce Man(5)GlcNAc(2). The polypeptide is Probable mannosyl-oligosaccharide alpha-1,2-mannosidase 1B (mns1B) (Neosartorya fischeri (strain ATCC 1020 / DSM 3700 / CBS 544.65 / FGSC A1164 / JCM 1740 / NRRL 181 / WB 181) (Aspergillus fischerianus)).